Consider the following 242-residue polypeptide: Phosphomannomutase 2 (242 aa).

The active-site Nucleophile is Asp8. Mg(2+)-binding residues include Asp8 and Asp10. The active-site Proton donor/acceptor is Asp10. Alpha-D-mannose 1-phosphate contacts are provided by Arg17, Arg119, Arg130, and Arg137. The residue at position 145 (Lys145) is an N6-acetyllysine. Positions 175 and 177 each coordinate alpha-D-mannose 1-phosphate. Mg(2+) contacts are provided by Asp205, Phe217, Asp219, and Thr222.

The protein belongs to the eukaryotic PMM family. As to quaternary structure, homodimer.

The protein resides in the cytoplasm. It carries out the reaction alpha-D-mannose 1-phosphate = D-mannose 6-phosphate. It participates in nucleotide-sugar biosynthesis; GDP-alpha-D-mannose biosynthesis; alpha-D-mannose 1-phosphate from D-fructose 6-phosphate: step 2/2. Involved in the synthesis of the GDP-mannose and dolichol-phosphate-mannose required for a number of critical mannosyl transfer reactions. The protein is Phosphomannomutase 2 (Pmm2) of Mus musculus (Mouse).